The chain runs to 434 residues: Putative MgpC-like protein MPN_149 (434 aa).

Disordered stretches follow at residues 168 to 193 and 215 to 267; these read GSGQ…PKAV and EPLD…DNNG. Over residues 170 to 184 the composition is skewed to polar residues; it reads GQESSWNSQRSQKVL. A compositionally biased stretch (basic and acidic residues) spans 218 to 229; that stretch reads DSTKDGKGKDES. Residues 248-267 are compositionally biased toward polar residues; that stretch reads STGSQMAAVTDSQQSGDNNG.

Belongs to the MgpC family.

This Mycoplasma pneumoniae (strain ATCC 29342 / M129 / Subtype 1) (Mycoplasmoides pneumoniae) protein is Putative MgpC-like protein MPN_149.